A 546-amino-acid polypeptide reads, in one-letter code: MNHSEVKTGLIVTAKQTYYPIELSNAELLTHYETIQEYHEEISQNVLVQSSKTKPDIKLIDQQPEMNPHQTREAIVTFLYQLSVMTRVSNGIFFHAVRFYDRYCSKRVVLKDQAKLVVGTCLWLAAKTWGGCNHIINNVSIPTGGRFYGPNPRARIPRLSELVHYCGGSDLFDESMFIQMERHILDTLNWDVYEPMINDYILNVDENCLIQYELYKNQLQNNNSNGKEWSCKRKSQSSDDSDATVEEHISSSPQSTGLDGDTTTMDEDEELNSKIKLINLKRFLIDLSCWQYNLLKFELYEICNGMFSIINKFTNQDQGPFLSMPIGNDINSNTQTQVFSIIINGIVNSPPSLVEVYKEQYGIVPFILQVKDYNLELQKKLQLASTIDLTRKIAVNSRYFDQNASSSSVSSPSTYSSGTNYTPMRNFSAQSDNSVFSTTNIDHSSPITPHMYTFNQFKNESACDSAISVSSLPNQTQNGNMPLSSNYQNMMLEERNKENRIPNSSSAEIPQRAKFMTTGIFQNTGELTNRASSISLSLRNHNSSQL.

Residues 224-265 (SNGKEWSCKRKSQSSDDSDATVEEHISSSPQSTGLDGDTTTM) are disordered.

Belongs to the cyclin family.

In terms of biological role, essential for the control of the cell cycle at the G1/S (start) transition. Interacts with the CDC28 protein kinase to form MPF. This chain is G1/S-specific cyclin CLN1 (CLN1), found in Saccharomyces cerevisiae (strain ATCC 204508 / S288c) (Baker's yeast).